A 415-amino-acid polypeptide reads, in one-letter code: Mitogen-activated protein kinase MPS1 (415 aa).

The region spanning 23–314 (YTVTKELGQG…VEQALEHPYL (292 aa)) is the Protein kinase domain. Residues 29-37 (LGQGAYGIV) and Lys52 each bind ATP. A disordered region spans residues 363-394 (GAGGHGAPHAPQVPIPAGAGQGQWKAEDPRPQ).

Belongs to the protein kinase superfamily. Ser/Thr protein kinase family. MAP kinase subfamily. In terms of assembly, interacts with transcription factor MIG1. Interacts with transcription factor SWI6. The cofactor is Mg(2+).

The catalysed reaction is L-seryl-[protein] + ATP = O-phospho-L-seryl-[protein] + ADP + H(+). It carries out the reaction L-threonyl-[protein] + ATP = O-phospho-L-threonyl-[protein] + ADP + H(+). In terms of biological role, mitogen-activated protein kinase; part of the MCK1-MKK2-MPS1 MAP kinase (MAPK) signal transduction cascade that is essential for cell wall integrity and plant infection, but not for plant defense responses. Beside its role in pathogenesis, the MPS1 cascade is active in conidiation and cellular stress responses. Targets downstream of the MPS1-MAPK pathway include transcription factors MIG1 and SWI6, as well as GSK1 and MPG1. This is Mitogen-activated protein kinase MPS1 from Pyricularia oryzae (strain 70-15 / ATCC MYA-4617 / FGSC 8958) (Rice blast fungus).